Here is a 97-residue protein sequence, read N- to C-terminus: UPF0213 protein YE0453 (97 aa).

Residues 4–79 enclose the GIY-YIG domain; it reads SLWHLYLLRT…KQLSKQQKEK (76 aa).

It belongs to the UPF0213 family.

The protein is UPF0213 protein YE0453 of Yersinia enterocolitica serotype O:8 / biotype 1B (strain NCTC 13174 / 8081).